The following is a 116-amino-acid chain: G antigen 2D (116 aa).

Residues 1 to 116 (MSWRGRSTYR…PEEGEKQSQC (116 aa)) are disordered. Acidic residues-rich tracts occupy residues 31–44 (FSDEVEPATPEEGE) and 86–95 (ECEDGPDGQE). Residues 102–116 (EEVKTPEEGEKQSQC) show a composition bias toward basic and acidic residues.

It belongs to the GAGE family. Not expressed in normal tissues, except in testis, but expressed by a large proportion of tumors of various histological origins.

The polypeptide is G antigen 2D (GAGE2D) (Homo sapiens (Human)).